Here is a 429-residue protein sequence, read N- to C-terminus: Serine--tRNA ligase (429 aa).

228–230 is an L-serine binding site; it reads TSE. 259 to 261 is a binding site for ATP; it reads RAE. E282 provides a ligand contact to L-serine. An ATP-binding site is contributed by 346–349; the sequence is EISS. S384 contributes to the L-serine binding site.

This sequence belongs to the class-II aminoacyl-tRNA synthetase family. Type-1 seryl-tRNA synthetase subfamily. As to quaternary structure, homodimer. The tRNA molecule binds across the dimer.

The protein localises to the cytoplasm. It carries out the reaction tRNA(Ser) + L-serine + ATP = L-seryl-tRNA(Ser) + AMP + diphosphate + H(+). The catalysed reaction is tRNA(Sec) + L-serine + ATP = L-seryl-tRNA(Sec) + AMP + diphosphate + H(+). Its pathway is aminoacyl-tRNA biosynthesis; selenocysteinyl-tRNA(Sec) biosynthesis; L-seryl-tRNA(Sec) from L-serine and tRNA(Sec): step 1/1. Catalyzes the attachment of serine to tRNA(Ser). Is also able to aminoacylate tRNA(Sec) with serine, to form the misacylated tRNA L-seryl-tRNA(Sec), which will be further converted into selenocysteinyl-tRNA(Sec). This chain is Serine--tRNA ligase, found in Anaplasma marginale (strain St. Maries).